We begin with the raw amino-acid sequence, 132 residues long: Large ribosomal subunit protein uL14 (132 aa).

This sequence belongs to the universal ribosomal protein uL14 family. In terms of assembly, part of the 50S ribosomal subunit. Forms a cluster with proteins L3 and L24e, part of which may contact the 16S rRNA in 2 intersubunit bridges.

Binds to 23S rRNA. Forms part of two intersubunit bridges in the 70S ribosome. The chain is Large ribosomal subunit protein uL14 from Methanoregula boonei (strain DSM 21154 / JCM 14090 / 6A8).